The sequence spans 143 residues: Ribosome-binding factor A (143 aa).

The segment at 123–143 (VRAQAAQAKPAGEANPYKERN) is disordered. A compositionally biased stretch (low complexity) spans 124–136 (RAQAAQAKPAGEA).

Belongs to the RbfA family. In terms of assembly, monomer. Binds 30S ribosomal subunits, but not 50S ribosomal subunits or 70S ribosomes.

It localises to the cytoplasm. Its function is as follows. One of several proteins that assist in the late maturation steps of the functional core of the 30S ribosomal subunit. Associates with free 30S ribosomal subunits (but not with 30S subunits that are part of 70S ribosomes or polysomes). Required for efficient processing of 16S rRNA. May interact with the 5'-terminal helix region of 16S rRNA. The chain is Ribosome-binding factor A from Corynebacterium urealyticum (strain ATCC 43042 / DSM 7109).